A 144-amino-acid polypeptide reads, in one-letter code: Large ribosomal subunit protein uL15 (144 aa).

Positions 1–45 (MNLNTLSPDPGSRPSRRRVGRGIGSGLGKTCGKGHKGQKSRAGGY) are disordered. The segment covering 21–31 (RGIGSGLGKTC) has biased composition (gly residues).

It belongs to the universal ribosomal protein uL15 family. In terms of assembly, part of the 50S ribosomal subunit.

Functionally, binds to the 23S rRNA. The chain is Large ribosomal subunit protein uL15 from Legionella pneumophila (strain Paris).